A 156-amino-acid chain; its full sequence is Phosphoribosyl-AMP cyclohydrolase (156 aa).

Aspartate 106 provides a ligand contact to Mg(2+). Cysteine 107 contributes to the Zn(2+) binding site. Aspartate 108 and aspartate 110 together coordinate Mg(2+). 2 residues coordinate Zn(2+): cysteine 123 and cysteine 130.

Belongs to the PRA-CH family. As to quaternary structure, homodimer. Requires Mg(2+) as cofactor. Zn(2+) is required as a cofactor.

The protein resides in the cytoplasm. The enzyme catalyses 1-(5-phospho-beta-D-ribosyl)-5'-AMP + H2O = 1-(5-phospho-beta-D-ribosyl)-5-[(5-phospho-beta-D-ribosylamino)methylideneamino]imidazole-4-carboxamide. Its pathway is amino-acid biosynthesis; L-histidine biosynthesis; L-histidine from 5-phospho-alpha-D-ribose 1-diphosphate: step 3/9. Catalyzes the hydrolysis of the adenine ring of phosphoribosyl-AMP. This is Phosphoribosyl-AMP cyclohydrolase from Gluconobacter oxydans (strain 621H) (Gluconobacter suboxydans).